The sequence spans 380 residues: Glucose-1-phosphate adenylyltransferase (380 aa).

Residues Gly164, 179-180, and Ser190 contribute to the alpha-D-glucose 1-phosphate site; that span reads EK.

This sequence belongs to the bacterial/plant glucose-1-phosphate adenylyltransferase family. Homotetramer.

The catalysed reaction is alpha-D-glucose 1-phosphate + ATP + H(+) = ADP-alpha-D-glucose + diphosphate. The protein operates within glycan biosynthesis; glycogen biosynthesis. Involved in the biosynthesis of ADP-glucose, a building block required for the elongation reactions to produce glycogen. Catalyzes the reaction between ATP and alpha-D-glucose 1-phosphate (G1P) to produce pyrophosphate and ADP-Glc. This Lactococcus lactis subsp. lactis (strain IL1403) (Streptococcus lactis) protein is Glucose-1-phosphate adenylyltransferase.